We begin with the raw amino-acid sequence, 756 residues long: MAIVGGLVDVPFENKVEFDDLARFAVQDYNQKNDSSLEFKKVLNVKQQIVAGIMYYITFEATEGGNKKEYEAKILLRKWEDLKKVVGFKLVGDDSTMPGGIVNVPNPNNTKFQELARFAIQDYNKKQNAHLEFVENLNVKEQVVAGIMYYITLAATDDAGKKKIYKAKIWVKEWEDFKKVVEFKLVGDDIAKLGGITDVPFPNNPEFQDLARFAIQVYNKKENVHLEFVENLNVKQQVVAGMMYYITLAAIDAGKKKIYETKIWVKEWEDFKKVVEFKLVGDDSAKTGGIINVPNPNSPEFQDLARFAVQDYNNTQNAHLEFVENLNVKEQLVSGMMYYITLAATDAGNKKEYEAKIWVKEWEDFKKVIDFKLVGNDSAKKLGGFTEVPFPNSPEFQDLTRFAVHQYNKDQNAHLEFVENLNVKKQVVAGMLYYITFAATDGGKKKIYETKIWVKVWENFKKVVEFKLVGDDSAKLGGIINVPFPNNPEFQDLARFAVQDYNKKENAHLEFVENLNVKEQLVAGMLYYITLVAIDAGKKKIYEAKIWVKEWENFKKVIEFKLIGDDSAIIGGFTDVPFPNNPEFQDLARFAVQDYNKKENAHLEYVENLNVKEQLVAGMIYYITLVATDAGKKKIYEAKIWVKEWEDFKKVVEFKLVGDDSAKPGGIIIVPFPNSPEFQDLARFAVQDFNKKENGHLEFVENLNVKEQVVAGMMYYITLAATDARKKEIYETKILVKEWENFKEVQEFKLVGDATK.

Cystatin domains lie at 3–96 (IVGG…DDST), 97–191 (MPGG…DDIA), 192–285 (KLGG…DDSA), 286–380 (KTGG…DSAK), 381–474 (KLGG…DDSA), 475–568 (KLGG…DDSA), 569–662 (IIGG…DDSA), and 663–756 (KPGG…DATK). 8 short sequence motifs (secondary area of contact) span residues 48 to 52 (QIVAG), 142 to 146 (QVVAG), 237 to 241 (QVVAG), 331 to 335 (QLVSG), 426 to 430 (QVVAG), 520 to 524 (QLVAG), 614 to 618 (QLVAG), and 708 to 712 (QVVAG).

This sequence belongs to the cystatin family. Phytocystatin subfamily. Expressed abundantly in tuber and leaf.

Its function is as follows. Probably has a role in the plant's defense system. This is Multicystatin from Solanum tuberosum (Potato).